The chain runs to 190 residues: Threonylcarbamoyl-AMP synthase (190 aa).

Positions 10 to 190 constitute a YrdC-like domain; sequence PQDKESVYRH…DWHSRQVIRA (181 aa).

It belongs to the SUA5 family. TsaC subfamily.

Its subcellular location is the cytoplasm. It carries out the reaction L-threonine + hydrogencarbonate + ATP = L-threonylcarbamoyladenylate + diphosphate + H2O. In terms of biological role, required for the formation of a threonylcarbamoyl group on adenosine at position 37 (t(6)A37) in tRNAs that read codons beginning with adenine. Catalyzes the conversion of L-threonine, HCO(3)(-)/CO(2) and ATP to give threonylcarbamoyl-AMP (TC-AMP) as the acyladenylate intermediate, with the release of diphosphate. The polypeptide is Threonylcarbamoyl-AMP synthase (Dichelobacter nodosus (strain VCS1703A)).